Consider the following 283-residue polypeptide: 2-dehydro-3-deoxyphosphooctonate aldolase (283 aa).

It belongs to the KdsA family.

The protein localises to the cytoplasm. The enzyme catalyses D-arabinose 5-phosphate + phosphoenolpyruvate + H2O = 3-deoxy-alpha-D-manno-2-octulosonate-8-phosphate + phosphate. It functions in the pathway carbohydrate biosynthesis; 3-deoxy-D-manno-octulosonate biosynthesis; 3-deoxy-D-manno-octulosonate from D-ribulose 5-phosphate: step 2/3. Its pathway is bacterial outer membrane biogenesis; lipopolysaccharide biosynthesis. The polypeptide is 2-dehydro-3-deoxyphosphooctonate aldolase (Vibrio parahaemolyticus serotype O3:K6 (strain RIMD 2210633)).